The primary structure comprises 389 residues: Naringenin-chalcone synthase (389 aa).

Residue cysteine 164 is part of the active site.

It belongs to the thiolase-like superfamily. Chalcone/stilbene synthases family. As to expression, expressed in glandular trichomes. Detected at low levels in female flowers, stems, seeds, leaves and roots.

The protein localises to the cytoplasm. The enzyme catalyses (E)-4-coumaroyl-CoA + 3 malonyl-CoA + 3 H(+) = 2',4,4',6'-tetrahydroxychalcone + 3 CO2 + 4 CoA. Its function is as follows. Chalcone synthase that can also use isovaleryl-CoA, isobutyryl-CoA or hexanoyl-CoA as substrates, but that is unable to produce olivetol or olivetolic acid. The sequence is that of Naringenin-chalcone synthase (CHS) from Cannabis sativa (Hemp).